Reading from the N-terminus, the 90-residue chain is DNA-binding protein HU-1 (90 aa).

T4 is subject to Phosphothreonine.

Belongs to the bacterial histone-like protein family. In terms of assembly, homodimer.

Histone-like DNA-binding protein which is capable of wrapping DNA to stabilize it, and thus to prevent its denaturation under extreme environmental conditions. The sequence is that of DNA-binding protein HU-1 (hup2) from Halalkalibacterium halodurans (strain ATCC BAA-125 / DSM 18197 / FERM 7344 / JCM 9153 / C-125) (Bacillus halodurans).